Consider the following 460-residue polypeptide: Photosystem II CP43 reaction center protein (460 aa).

Residue methionine 1 is a propeptide. 5 consecutive transmembrane segments (helical) span residues 56-80 (LFET…PHLA), 121-142 (IVGP…RDKN), 165-187 (KALF…RFIT), 242-262 (RPFS…LSYS), and 278-299 (WYNN…ASQA). Glutamate 354 is a binding site for [CaMn4O5] cluster. A helical transmembrane segment spans residues 434–458 (RARAAAAGFEKGINRENEPVLSMRP).

It belongs to the PsbB/PsbC family. PsbC subfamily. As to quaternary structure, PSII is composed of 1 copy each of membrane proteins PsbA, PsbB, PsbC, PsbD, PsbE, PsbF, PsbH, PsbI, PsbJ, PsbK, PsbL, PsbM, PsbT, PsbY, PsbZ, Psb30/Ycf12, at least 3 peripheral proteins of the oxygen-evolving complex and a large number of cofactors. It forms dimeric complexes. Binds multiple chlorophylls and provides some of the ligands for the Ca-4Mn-5O cluster of the oxygen-evolving complex. It may also provide a ligand for a Cl- that is required for oxygen evolution. PSII binds additional chlorophylls, carotenoids and specific lipids. is required as a cofactor.

The protein resides in the plastid. The protein localises to the chloroplast thylakoid membrane. One of the components of the core complex of photosystem II (PSII). It binds chlorophyll and helps catalyze the primary light-induced photochemical processes of PSII. PSII is a light-driven water:plastoquinone oxidoreductase, using light energy to abstract electrons from H(2)O, generating O(2) and a proton gradient subsequently used for ATP formation. This is Photosystem II CP43 reaction center protein from Cyanidium caldarium (Red alga).